The sequence spans 757 residues: Filensin (757 aa).

Residues 1–39 are head; it reads MYRRSYVFQTRKEQYERAEEAPRAAEPDRLAEARAAAPN. At Ser5 the chain carries Phosphoserine. The 281-residue stretch at 39-319 folds into the IF rod domain; sequence NLAALQGLGE…RIIENEGNRL (281 aa). The tract at residues 40 to 74 is coil 1A; sequence LAALQGLGERVAAHVQRARALEQRHAVLRRQLDAF. Ala41 is subject to N-acetylalanine. The segment at 75 to 83 is linker 1; that stretch reads QRLDELAGP. Residues 84–183 form a coil 1B region; that stretch reads EDALARHVEG…RYKKNLLEIQ (100 aa). Residues 184–200 are linker 12; it reads TYVTILQQIIQTTPQAA. Residues 201 to 319 are coil 2; it reads AITSGMREEK…RIIENEGNRL (119 aa). Residues 320-756 are tail; the sequence is SSAFIETPIT…KKLGEKGSSS (437 aa). Ser340 and Ser419 each carry phosphoserine. Disordered regions lie at residues 406–436 and 493–705; these read EGES…GGKI and GVVV…PPRK. A lipid anchor (N-myristoyl glycine) is attached at Gly433. Over residues 493–512 the composition is skewed to low complexity; sequence GVVVSKGDDSVPPDSGVEPS. Ser512 bears the Phosphoserine mark. Residues 528 to 658 are compositionally biased toward basic and acidic residues; that stretch reads QEKEDGLKEE…KQDDQKEEGA (131 aa). Repeat unit 1 spans residues 532–545; it reads DGLKEEGGPPEGKG. Residues 532 to 622 form a 7 X 14 AA tandem repeats region; the sequence is DGLKEEGGPP…EEEGPLQKKE (91 aa). Residues 546-552 form a 2; truncated repeat; sequence EPPEGKG. Tandem repeats lie at residues 553–566, 567–580, 581–594, 595–608, and 609–622. Residues Thr628 and Thr674 each carry the phosphothreonine modification. 3 positions are modified to phosphoserine: Ser701, Ser754, and Ser755.

Belongs to the intermediate filament family. Part of a complex required for lens intermediate filament formation composed of BFSP1, BFSP2 and CRYAA. Identified in a complex that contains VIM, EZR, AHNAK, BFSP1, BFSP2, ANK2, PLEC, PRX and spectrin. Found in a complex composed of PPL (via C-terminal linker domain), BFSP1 and BFSP2 in the retinal lens. Within the complex interacts with BFSP2. Interacts (via C-terminus) with MIP (via C-terminus) in aged lens fiber cells. Proteolytically cleaved during lens cell fiber differentiation with increased fragmentation as fiber cell age increases. In terms of processing, myristoylated at Gly-433 following proteolytic cleavage at Asp-432. Post-translationally, acetylated at Ala-41 following proteolytic cleavage at Leu-40. As to expression, abundantly expressed in both the inner and outer cortex of the retina, expressed at a lower level in the nucleus of the retina (at protein level). Detected in eye lens fiber cells (at protein level).

It localises to the cell membrane. The protein resides in the cytoplasm. The protein localises to the cytoskeleton. It is found in the cell cortex. Functionally, required for the correct formation of lens intermediate filaments as part of a complex composed of BFSP1, BFSP2 and CRYAA. Involved in altering the calcium regulation of MIP water permeability. This chain is Filensin (BFSP1), found in Bos taurus (Bovine).